We begin with the raw amino-acid sequence, 136 residues long: NADH-quinone oxidoreductase subunit A (136 aa).

Helical transmembrane passes span 20–40, 70–90, and 99–119; these read LAVY…VAWW, VPFY…AYIL, and LGWA…VGLV.

The protein belongs to the complex I subunit 3 family. In terms of assembly, NDH-1 is composed of 14 different subunits. Subunits NuoA, H, J, K, L, M, N constitute the membrane sector of the complex.

The protein localises to the cell inner membrane. It carries out the reaction a quinone + NADH + 5 H(+)(in) = a quinol + NAD(+) + 4 H(+)(out). In terms of biological role, NDH-1 shuttles electrons from NADH, via FMN and iron-sulfur (Fe-S) centers, to quinones in the respiratory chain. The immediate electron acceptor for the enzyme in this species is believed to be ubiquinone. Couples the redox reaction to proton translocation (for every two electrons transferred, four hydrogen ions are translocated across the cytoplasmic membrane), and thus conserves the redox energy in a proton gradient. This chain is NADH-quinone oxidoreductase subunit A, found in Syntrophobacter fumaroxidans (strain DSM 10017 / MPOB).